We begin with the raw amino-acid sequence, 1456 residues long: MATHAEEIVLVNTNILNVNMSNVTKLTSTNYLMWSRQVHALFDGYELAGFLDGSTPMPPATIGTDAVPRVNPDYTRWRRQDKLIYSAILGAISMSVQPAVSRATTAAQIWETLRKIYANPSYGHVTQLRFITRFDQLALLGKPMDHDEQVERVLENLPDDYKPVIDQIAAKDTPPSLTEIHERLINRESKLLALNSAEVVPITANVVTHRNTNTNRNQNNRGDNRNYNNNNNRSNSWQPSSSGSRSDNRQPKPYLGRCQICSVQGHSAKRCPQLHQFQSTTNQQQSTSPFTPWQPRANLAVNSPYNANNWLLDSGATHHITSDFNNLSFHQPYTGGDDVMIADGSTIPITHTGSASLPTSSRSLDLNKVLYVPNIHKNLISVYRLCNTNRVSVEFFPASFQVKDLNTGVPLLQGKTKDELYEWPIASSQAVSMFASPCSKATHSSWHSRLGHPSLAILNSVISNHSLPVLNPSHKLLSCSDCFINKSHKVPFSNSTITSSKPLEYIYSDVWSSPILSIDNYRYYVIFVDHFTRYTWLYPLKQKSQVKDTFIIFKSLVENRFQTRIGTLYSDNGGEFVVLRDYLSQHGISHFTSPPHTPEHNGLSERKHRHIVEMGLTLLSHASVPKTYWPYAFSVAVYLINRLPTPLLQLQSPFQKLFGQPPNYEKLKVFGCACYPWLRPYNRHKLEDKSKQCAFMGYSLTQSAYLCLHIPTGRLYTSRHVQFDERCFPFSTTNFGVSTSQEQRSDSAPNWPSHTTLPTTPLVLPAPPCLGPHLDTSPRPPSSPSPLCTTQVSSSNLPSSSISSPSSSEPTAPSHNGPQPTAQPHQTQNSNSNSPILNNPNPNSPSPNSPNQNSPLPQSPISSPHIPTPSTSISEPNSPSSSSTSTPPLPPVLPAPPIIQVNAQAPVNTHSMATRAKDGIRKPNQKYSYATSLAANSEPRTAIQAMKDDRWRQAMGSEINAQIGNHTWDLVPPPPPSVTIVGCRWIFTKKFNSDGSLNRYKARLVAKGYNQRPGLDYAETFSPVIKSTSIRIVLGVAVDRSWPIRQLDVNNAFLQGTLTDEVYMSQPPGFVDKDRPDYVCRLRKAIYGLKQAPRAWYVELRTYLLTVGFVNSISDTSLFVLQRGRSIIYMLVYVDDILITGNDTVLLKHTLDALSQRFSVKEHEDLHYFLGIEAKRVPQGLHLSQRRYTLDLLARTNMLTAKPVATPMATSPKLTLHSGTKLPDPTEYRGIVGSLQYLAFTRPDLSYAVNRLSQYMHMPTDDHWNALKRVLRYLAGTPDHGIFLKKGNTLSLHAYSDADWAGDTDDYVSTNGYIVYLGHHPISWSSKKQKGVVRSSTEAEYRSVANTSSELQWICSLLTELGIQLSHPPVIYCDNVGATYLCANPVFHSRMKHIALDYHFIRNQVQSGALRVVHVSTHDQLADTLTKPLSRVAFQNFSRKIGVIKVPPSCGGVLRI.

Residues Asn205–Lys252 form a disordered region. The span at Arg210 to Arg245 shows a compositional bias: low complexity. The CCHC-type zinc finger occupies Arg257 to Gln273. The segment covering Gln276–Thr291 has biased composition (low complexity). Positions Gln276–Pro295 are disordered. The For protease activity role is filled by Asp313. Residues Thr498 to Pro661 enclose the Integrase catalytic domain. Positions 509 and 571 each coordinate Mg(2+). The segment covering Ser738 to His754 has biased composition (polar residues). The segment at Ser738–Pro896 is disordered. Over residues Ser793–Ser814 the composition is skewed to low complexity. Over residues Asn816–Thr827 the composition is skewed to polar residues. Low complexity-rich tracts occupy residues Gln828 to Asn841 and Ser849 to Thr886. Positions Pro887 to Pro896 are enriched in pro residues. The Reverse transcriptase Ty1/copia-type domain maps to Asn965–Met1208.

The catalysed reaction is DNA(n) + a 2'-deoxyribonucleoside 5'-triphosphate = DNA(n+1) + diphosphate. This is Retrovirus-related Pol polyprotein from transposon RE2 (RE2) from Arabidopsis thaliana (Mouse-ear cress).